We begin with the raw amino-acid sequence, 295 residues long: Acetylglutamate kinase (295 aa).

Substrate is bound by residues 64–65 (GG), arginine 86, and asparagine 190.

Belongs to the acetylglutamate kinase family. ArgB subfamily.

The protein localises to the cytoplasm. It carries out the reaction N-acetyl-L-glutamate + ATP = N-acetyl-L-glutamyl 5-phosphate + ADP. Its pathway is amino-acid biosynthesis; L-arginine biosynthesis; N(2)-acetyl-L-ornithine from L-glutamate: step 2/4. In terms of biological role, catalyzes the ATP-dependent phosphorylation of N-acetyl-L-glutamate. The sequence is that of Acetylglutamate kinase from Oleidesulfovibrio alaskensis (strain ATCC BAA-1058 / DSM 17464 / G20) (Desulfovibrio alaskensis).